The primary structure comprises 211 residues: Protein-L-isoaspartate O-methyltransferase (211 aa).

The active site involves serine 62.

The protein belongs to the methyltransferase superfamily. L-isoaspartyl/D-aspartyl protein methyltransferase family.

The protein localises to the cytoplasm. The enzyme catalyses [protein]-L-isoaspartate + S-adenosyl-L-methionine = [protein]-L-isoaspartate alpha-methyl ester + S-adenosyl-L-homocysteine. Functionally, catalyzes the methyl esterification of L-isoaspartyl residues in peptides and proteins that result from spontaneous decomposition of normal L-aspartyl and L-asparaginyl residues. It plays a role in the repair and/or degradation of damaged proteins. The chain is Protein-L-isoaspartate O-methyltransferase from Shewanella loihica (strain ATCC BAA-1088 / PV-4).